The chain runs to 30 residues: Cycloviolacin-O20 (30 aa).

The segment at residues 1–30 is a cross-link (cyclopeptide (Gly-Asp)); that stretch reads GIPCGESCVWIPCLTSAIGCSCKSKVCYRD. 3 disulfide bridges follow: Cys4-Cys20, Cys8-Cys22, and Cys13-Cys27.

In terms of processing, this is a cyclic peptide.

In terms of biological role, probably participates in a plant defense mechanism. The chain is Cycloviolacin-O20 from Viola odorata (Sweet violet).